Consider the following 198-residue polypeptide: NAD(P)H-quinone oxidoreductase chain 6 (198 aa).

The next 5 helical transmembrane spans lie at 9–29, 32–52, 61–81, 100–120, and 145–165; these read YISF…VVLL, IVYS…IYIL, AQVL…IMLV, TALV…ITPW, and LLPF…AIIL.

It belongs to the complex I subunit 6 family.

It is found in the membrane. It catalyses the reaction a plastoquinone + NADH + (n+1) H(+)(in) = a plastoquinol + NAD(+) + n H(+)(out). It carries out the reaction a plastoquinone + NADPH + (n+1) H(+)(in) = a plastoquinol + NADP(+) + n H(+)(out). Functionally, NDH-1 shuttles electrons from NAD(P)H, via FMN and iron-sulfur (Fe-S) centers, to quinones in the respiratory chain. The immediate electron acceptor for the enzyme in this species is believed to be plastoquinone. Couples the redox reaction to proton translocation (for every two electrons transferred, four hydrogen ions are translocated across the cytoplasmic membrane), and thus conserves the redox energy in a proton gradient. The sequence is that of NAD(P)H-quinone oxidoreductase chain 6 (ndhG) from Synechocystis sp. (strain ATCC 27184 / PCC 6803 / Kazusa).